Here is a 121-residue protein sequence, read N- to C-terminus: Protransforming growth factor alpha (121 aa).

A signal peptide is located at residue Leu1. Residues 2-16 constitute a propeptide, removed in mature form; that stretch reads ENSTSLLSDPPVAAA. At 2 to 75 the chain is on the extracellular side; it reads ENSTSLLSDP…AVVAASQKKQ (74 aa). Asn3 is a glycosylation site (N-linked (GlcNAc...) asparagine). The region spanning 20 to 60 is the EGF-like domain; sequence HFNDCPDSHTQFCFHGTCRFLVQEDRPACVCHSGYVGARCE. 3 disulfides stabilise this stretch: Cys24–Cys37, Cys32–Cys48, and Cys50–Cys59. The propeptide at 67–121 is removed in mature form; that stretch reads VVAASQKKQAITALVVVSIVALAVLIITCVLIHCCQVRKHCEWCRALICRHEKPS. A helical membrane pass occupies residues 76–101; the sequence is AITALVVVSIVALAVLIITCVLIHCC.

Interacts with the PDZ domains of MAGI3, SDCBP and SNTA1. The interaction with SDCBP, is required for the targeting to the cell surface. In the endoplasmic reticulum, in its immature form (i.e. with a prosegment and lacking full N-glycosylation), interacts with CNIH. In the Golgi apparatus, may form a complex with CNIH and GORASP2. Interacts (via cytoplasmic C-terminal domain) with NKD2. As to expression, hypothalamus.

Its subcellular location is the secreted. It is found in the extracellular space. It localises to the cell membrane. In terms of biological role, TGF alpha is a mitogenic polypeptide that is able to bind to the EGF receptor/EGFR and to act synergistically with TGF beta to promote anchorage-independent cell proliferation in soft agar. The sequence is that of Protransforming growth factor alpha (TGFA) from Macaca mulatta (Rhesus macaque).